Reading from the N-terminus, the 745-residue chain is Centromere protein I (745 aa).

Residues 1–27 are compositionally biased toward polar residues; sequence MATPRLTRNSQQQNRISQGSNSRQTTL. Positions 1–58 are disordered; sequence MATPRLTRNSQQQNRISQGSNSRQTTLLDWKVKDKAGNSKSVLEESSSLEDSNHADDQ. The segment covering 39 to 50 has biased composition (low complexity); sequence SKSVLEESSSLE.

Belongs to the CENP-I/CTF3 family. As to quaternary structure, component of the CENPA-CAD complex, composed of CENPI, CENPK, CENPL, CENPO, CENPP, CENPQ, CENPR and CENPS. The CENPA-CAD complex interacts with the CENPA-NAC complex, at least composed of CENPA, CENPC, CENPH, CENPM, CENPN, CENPT and CENPU. Interacts with SENP6. Post-translationally, sumoylated. Sumoylated form can be polyubiquitinated by RNF4, leading to its degradation. Desumoylation by SENP6 prevents its degradation. Highly expressed in testis, ovary and spleen. A much lower mRNA level is found in brain and lung, and no expression is detected in liver, kidney, heart, muscle, pituitary gland, prostate, epididymis and seminal vesicle.

Its subcellular location is the nucleus. The protein resides in the chromosome. It localises to the centromere. Component of the CENPA-CAD (nucleosome distal) complex, a complex recruited to centromeres which is involved in assembly of kinetochore proteins, mitotic progression and chromosome segregation. May be involved in incorporation of newly synthesized CENPA into centromeres via its interaction with the CENPA-NAC complex. Required for the localization of CENPF, MAD1L1 and MAD2 (MAD2L1 or MAD2L2) to kinetochores. Involved in the response of gonadal tissues to follicle-stimulating hormone. This is Centromere protein I (Cenpi) from Rattus norvegicus (Rat).